A 206-amino-acid chain; its full sequence is Probable GTP-binding protein EngB (206 aa).

In terms of domain architecture, EngB-type G spans isoleucine 29–aspartate 201. Residues glycine 37–serine 44, glycine 64–alanine 68, aspartate 82–glycine 85, threonine 149–aspartate 152, and tyrosine 180–valine 182 each bind GTP. 2 residues coordinate Mg(2+): serine 44 and threonine 66.

It belongs to the TRAFAC class TrmE-Era-EngA-EngB-Septin-like GTPase superfamily. EngB GTPase family. Requires Mg(2+) as cofactor.

In terms of biological role, necessary for normal cell division and for the maintenance of normal septation. The chain is Probable GTP-binding protein EngB from Protochlamydia amoebophila (strain UWE25).